The primary structure comprises 399 residues: Serine palmitoyltransferase (399 aa).

Residues 113-114 (GF), H213, T241, and S243 each bind pyridoxal 5'-phosphate. K244 is modified (N6-(pyridoxal phosphate)lysine).

This sequence belongs to the class-II pyridoxal-phosphate-dependent aminotransferase family. As to quaternary structure, homodimer. Pyridoxal 5'-phosphate serves as cofactor.

It localises to the cytoplasm. Its subcellular location is the cell inner membrane. The catalysed reaction is L-serine + hexadecanoyl-CoA + H(+) = 3-oxosphinganine + CO2 + CoA. It participates in lipid metabolism; sphingolipid metabolism. Catalyzes the condensation of L-serine with palmitoyl-CoA (hexadecanoyl-CoA) to produce 3-oxosphinganine. Exhibits a broad substrate specificity concerning the chain length and the degree of unsaturation of acyl-CoA. In Sphingobacterium multivorum, this protein is Serine palmitoyltransferase.